The following is a 366-amino-acid chain: Chorismate synthase (366 aa).

Arginine 48 contacts NADP(+). FMN is bound by residues 125–127, 241–242, glycine 285, 300–304, and arginine 326; these read RSS, NA, and KPTSS.

Belongs to the chorismate synthase family. Homotetramer. The cofactor is FMNH2.

It catalyses the reaction 5-O-(1-carboxyvinyl)-3-phosphoshikimate = chorismate + phosphate. It functions in the pathway metabolic intermediate biosynthesis; chorismate biosynthesis; chorismate from D-erythrose 4-phosphate and phosphoenolpyruvate: step 7/7. In terms of biological role, catalyzes the anti-1,4-elimination of the C-3 phosphate and the C-6 proR hydrogen from 5-enolpyruvylshikimate-3-phosphate (EPSP) to yield chorismate, which is the branch point compound that serves as the starting substrate for the three terminal pathways of aromatic amino acid biosynthesis. This reaction introduces a second double bond into the aromatic ring system. This Roseobacter denitrificans (strain ATCC 33942 / OCh 114) (Erythrobacter sp. (strain OCh 114)) protein is Chorismate synthase.